A 147-amino-acid polypeptide reads, in one-letter code: Large ribosomal subunit protein uL15 (147 aa).

The segment at 1–47 is disordered; sequence MKLHELKPAEGAVRAKRRLGRGTATGQGKTAGRGQKGQWSRSGGGVR. Residues 23 to 35 are compositionally biased toward gly residues; the sequence is TATGQGKTAGRGQ.

The protein belongs to the universal ribosomal protein uL15 family. In terms of assembly, part of the 50S ribosomal subunit.

Binds to the 23S rRNA. This is Large ribosomal subunit protein uL15 from Clostridioides difficile (strain 630) (Peptoclostridium difficile).